A 499-amino-acid chain; its full sequence is Glutamate--tRNA ligase (499 aa).

A 'HIGH' region motif is present at residues 12 to 22; that stretch reads PSPTGHLHIGN. The 'KMSKS' region motif lies at 259-263; that stretch reads KLSKR. Lys-262 lines the ATP pocket.

Belongs to the class-I aminoacyl-tRNA synthetase family. Glutamate--tRNA ligase type 1 subfamily. In terms of assembly, monomer.

It localises to the cytoplasm. The enzyme catalyses tRNA(Glu) + L-glutamate + ATP = L-glutamyl-tRNA(Glu) + AMP + diphosphate. Functionally, catalyzes the attachment of glutamate to tRNA(Glu) in a two-step reaction: glutamate is first activated by ATP to form Glu-AMP and then transferred to the acceptor end of tRNA(Glu). In Lactobacillus gasseri (strain ATCC 33323 / DSM 20243 / BCRC 14619 / CIP 102991 / JCM 1131 / KCTC 3163 / NCIMB 11718 / NCTC 13722 / AM63), this protein is Glutamate--tRNA ligase.